Reading from the N-terminus, the 581-residue chain is Adenine deaminase (581 aa).

It belongs to the metallo-dependent hydrolases superfamily. Adenine deaminase family. Mn(2+) is required as a cofactor.

The enzyme catalyses adenine + H2O + H(+) = hypoxanthine + NH4(+). The polypeptide is Adenine deaminase (Brucella abortus (strain 2308)).